We begin with the raw amino-acid sequence, 147 residues long: Large ribosomal subunit protein uL16 (147 aa).

Belongs to the universal ribosomal protein uL16 family. As to quaternary structure, part of the 50S ribosomal subunit.

In terms of biological role, binds 23S rRNA and is also seen to make contacts with the A and possibly P site tRNAs. In Lactobacillus delbrueckii subsp. bulgaricus (strain ATCC 11842 / DSM 20081 / BCRC 10696 / JCM 1002 / NBRC 13953 / NCIMB 11778 / NCTC 12712 / WDCM 00102 / Lb 14), this protein is Large ribosomal subunit protein uL16.